The chain runs to 236 residues: Syntaxin-8 (236 aa).

The Cytoplasmic portion of the chain corresponds to 1-215 (MAPDPWFSTY…LVDRKSTSCG (215 aa)). Positions 42–65 (VTIRALLQKLKEKIALLKDLLLRA) form a coiled coil. Residues 145-207 (QKIIQEQDAG…RTETRRVNLV (63 aa)) form the t-SNARE coiled-coil homology domain. Ser160 carries the phosphoserine modification. The helical; Anchor for type IV membrane protein transmembrane segment at 216–232 (MIMVILLLLVAIVVVAV) threads the bilayer. The Vesicular segment spans residues 233-236 (WPTK).

This sequence belongs to the syntaxin family. In terms of assembly, forms a SNARE complex with STX7, VTI1B and VAMP8 which functions in the homotypic fusion of late endosomes. Part of the SNARE core complex containing STX7, VAMP8 and VTI1B. Interacts with VAMP8. Interacts with HECTD3. Interacts with TPC1. In terms of processing, ubiquitinated by HECTD3.

It localises to the membrane. Its function is as follows. Vesicle trafficking protein that functions in the early secretory pathway, possibly by mediating retrograde transport from cis-Golgi membranes to the ER. The sequence is that of Syntaxin-8 (STX8) from Bos taurus (Bovine).